Consider the following 118-residue polypeptide: Ribosome-binding factor A (118 aa).

Belongs to the RbfA family. In terms of assembly, monomer. Binds 30S ribosomal subunits, but not 50S ribosomal subunits or 70S ribosomes.

It localises to the cytoplasm. Its function is as follows. One of several proteins that assist in the late maturation steps of the functional core of the 30S ribosomal subunit. Associates with free 30S ribosomal subunits (but not with 30S subunits that are part of 70S ribosomes or polysomes). Required for efficient processing of 16S rRNA. May interact with the 5'-terminal helix region of 16S rRNA. This Thermodesulfovibrio yellowstonii (strain ATCC 51303 / DSM 11347 / YP87) protein is Ribosome-binding factor A.